The sequence spans 70 residues: Large ribosomal subunit protein eL38 (70 aa).

The protein belongs to the eukaryotic ribosomal protein eL38 family.

This is Large ribosomal subunit protein eL38 (RPL38) from Branchiostoma belcheri (Amphioxus).